Consider the following 425-residue polypeptide: Protein CLP1 homolog (425 aa).

ATP-binding positions include Glu-18, Lys-59, and 121 to 126 (DVGKST).

Belongs to the Clp1 family. Clp1 subfamily.

The protein localises to the nucleus. Functionally, required for endonucleolytic cleavage during polyadenylation-dependent pre-mRNA 3'-end formation. This Drosophila pseudoobscura pseudoobscura (Fruit fly) protein is Protein CLP1 homolog (cbc).